The chain runs to 126 residues: MAERQKIALIAHDKMKDEMAAFARHHQRFLEQWQIVATGTTGARVHDACPKLDVLRMKSGPLGGDQQIGAMIAQEEVAMLIFFVDPLTPMPHDVDVKALMRLAILYDTPMALNRATADRLLPVITE.

The 126-residue stretch at M1 to E126 folds into the MGS-like domain. Substrate is bound by residues H12, K16, T38–T41, and S59–G60. Residue D65 is the Proton donor/acceptor of the active site. H92 provides a ligand contact to substrate.

Belongs to the methylglyoxal synthase family.

It catalyses the reaction dihydroxyacetone phosphate = methylglyoxal + phosphate. Functionally, catalyzes the formation of methylglyoxal from dihydroxyacetone phosphate. The protein is Methylglyoxal synthase of Allorhizobium ampelinum (strain ATCC BAA-846 / DSM 112012 / S4) (Agrobacterium vitis (strain S4)).